Consider the following 229-residue polypeptide: ATPase SWSAP1 (229 aa).

Residues 209-229 are disordered; the sequence is PWPTQAGDPSSGKGSSSGGQP.

As to quaternary structure, interacts with ZSWIM7; they form a functional complex involved in homologous recombination repair and stabilize each other. Interacts with RAD51, RAD51B, RAD51C, RAD51D and XRCC3; involved in homologous recombination repair.

It is found in the nucleus. Functionally, ATPase which is preferentially stimulated by single-stranded DNA and is involved in homologous recombination repair (HRR). Has a DNA-binding activity which is independent of its ATPase activity. This Homo sapiens (Human) protein is ATPase SWSAP1 (SWSAP1).